Reading from the N-terminus, the 541-residue chain is Copper transport protein CutJ (541 aa).

An N-terminal signal peptide occupies residues 1–25 (MKRNRWWIILLLFLVFLPKTSFAHA). Residues H24 and H110 each coordinate Cu cation. 8 consecutive transmembrane segments (helical) span residues 146-166 (AILY…LFWY), 180-200 (ILTG…PIQT), 228-248 (SIWI…IPAI), 262-282 (PLIF…AAVV), 293-313 (FLHL…VLLL), 335-355 (WALT…FFII), 370-390 (LLVK…HFLL), and 407-427 (WAIG…PSPP).

This sequence in the N-terminal section; belongs to the CopC family. The protein in the C-terminal section; belongs to the CopD family.

Its subcellular location is the cell membrane. Involved in uptake of extracellular oxidized copper under copper-limiting conditions. This is Copper transport protein CutJ from Bacillus subtilis (strain 168).